The primary structure comprises 271 residues: Insulin-like growth factor-binding protein 5 (271 aa).

An N-terminal signal peptide occupies residues Met1 to Gly19. The region spanning Ser22–Glu102 is the IGFBP N-terminal domain. Disulfide bonds link Cys26/Cys52, Cys29/Cys54, Cys37/Cys55, Cys44/Cys58, Cys66/Cys79, and Cys73/Cys99. The span at Thr109–Pro121 shows a compositional bias: basic and acidic residues. Residues Thr109 to Glu129 form a disordered region. Ser115 bears the Phosphoserine mark. One can recognise a Thyroglobulin type-1 domain in the interval Gln188–Cys262. Disulfide bonds link Cys191-Cys218, Cys229-Cys240, and Cys242-Cys262.

In terms of assembly, interacts with IGF1; this interaction enhances the growth stimulatory effects of IGF1 on fibroblasts. Interacts with CAV1; this interaction allows trafficking of IGFBP5 from the plasma membrane to the nucleus. Interacts with NCL; this interaction is necessary for IGFBP5 localization to the nucleus. In terms of tissue distribution, mostly in kidney.

It localises to the secreted. It is found in the cytoplasm. Its subcellular location is the nucleus. Functionally, multifunctional protein that plays a critical role in regulating the availability of IGFs to their receptors and thereby regulates IGF-mediated cellular processes including proliferation, differentiation, and apoptosis in a cell-type specific manner. Increases the cell proliferation of osteoblasts, intestinal smooth muscle cells and neuroblastoma cells. Enhances adhesion and survival of epithelial cells but decreases adhesion of mesenchymal cells. Once secreted, acts as a major mediator of mTORC1-dependent feedback inhibition of IGF1 signaling. Also plays a role in the induction of extracellular matrix (ECM) production and deposition independently of its nuclear translocation and binding to IGFs. Acts itself as a growth factor that can act independently of IGFs to regulate bone formation. Acts as a ligand for the ROR1 receptor which triggers formation of ROR1/HER2 heterodimer to enhance CREB oncogenic signaling. In Rattus norvegicus (Rat), this protein is Insulin-like growth factor-binding protein 5 (Igfbp5).